We begin with the raw amino-acid sequence, 480 residues long: MAEEVNERTRLLSQSDDPSPSLEELEEWEEPRNWKVSYRWLCIAVISVYGLISPVIAAIIVPAMPQIATDLNVTDPGMLQAFVSVYVLGWSFAPLVVGPLSEVYGRISLLNTGHGLFLVFNALCAFARSDYELLILRFITGAVGSAPLSIGAGIIGDLWAPEERGLSISLYTLGPLLGPAIAPITGAYIVSHTSWRAIFAWCSLYILITWVVGLCTLRETFRPVLIQRKQAAAVRKGQLPGSVQHHHKSLADVFRQDLRRPFTFLGTQPIIQVLSLFMGYLFGLNHLSITTFESVWTDIYNQTPSRAALNYISIAGGFILGSQITGSLNDRIYIYYTSKDPAKGTPELRTILMLPAALLVPTGLLIYGWSAQTHSHWIMPNIGIGIYALGLIMSYQCIQAYVLDCYAVYAASAMGALTILRSLLGFVLPILAPLIYRTLGYGWGSSLLALWALVMGGLVPILLWRYGAVLRKRSGILEEM.

The segment covering 1 to 10 has biased composition (basic and acidic residues); sequence MAEEVNERTR. A disordered region spans residues 1–24; that stretch reads MAEEVNERTRLLSQSDDPSPSLEE. Residues 11–22 are compositionally biased toward low complexity; that stretch reads LLSQSDDPSPSL. The next 12 helical transmembrane spans lie at 41–61, 81–101, 107–127, 138–158, 170–190, 197–217, 264–284, 308–328, 351–371, 378–398, 415–435, and 443–463; these read LCIA…AIIV, AFVS…GPLS, ISLL…CAFA, FITG…IGDL, LYTL…AYIV, AIFA…LCTL, FLGT…LFGL, ALNY…TGSL, ILML…GWSA, IMPN…YQCI, GALT…APLI, and WGSS…PILL.

It belongs to the major facilitator superfamily.

It is found in the membrane. Functionally, MFS-type transporter; part of the gene cluster that mediates the biosynthesis of oryzines, natural products with an unusual maleidride backbone. In Aspergillus oryzae (strain ATCC 42149 / RIB 40) (Yellow koji mold), this protein is MFS-type transporter oryF.